The sequence spans 285 residues: Nucleotide-binding protein Pmen_0867 (285 aa).

Residue 8 to 15 (GRSGSGKS) participates in ATP binding. Residue 60–63 (DARN) participates in GTP binding.

Belongs to the RapZ-like family.

In terms of biological role, displays ATPase and GTPase activities. In Ectopseudomonas mendocina (strain ymp) (Pseudomonas mendocina), this protein is Nucleotide-binding protein Pmen_0867.